A 392-amino-acid polypeptide reads, in one-letter code: Chorismate synthase (392 aa).

Residues R40 and R46 each coordinate NADP(+). Residues 129-131 (RSS), 257-258 (QA), G302, 317-321 (KPIAT), and R343 each bind FMN.

The protein belongs to the chorismate synthase family. In terms of assembly, homotetramer. FMNH2 is required as a cofactor.

It catalyses the reaction 5-O-(1-carboxyvinyl)-3-phosphoshikimate = chorismate + phosphate. It participates in metabolic intermediate biosynthesis; chorismate biosynthesis; chorismate from D-erythrose 4-phosphate and phosphoenolpyruvate: step 7/7. Catalyzes the anti-1,4-elimination of the C-3 phosphate and the C-6 proR hydrogen from 5-enolpyruvylshikimate-3-phosphate (EPSP) to yield chorismate, which is the branch point compound that serves as the starting substrate for the three terminal pathways of aromatic amino acid biosynthesis. This reaction introduces a second double bond into the aromatic ring system. The chain is Chorismate synthase from Chloroherpeton thalassium (strain ATCC 35110 / GB-78).